The following is a 405-amino-acid chain: L-carnitine CoA-transferase (405 aa).

CoA contacts are provided by K97 and R104. The active-site Nucleophile is D169.

This sequence belongs to the CoA-transferase III family. CaiB subfamily. In terms of assembly, homodimer.

The protein localises to the cytoplasm. It catalyses the reaction crotonobetainyl-CoA + (R)-carnitine = crotonobetaine + (R)-carnitinyl-CoA. The enzyme catalyses 4-(trimethylamino)butanoyl-CoA + (R)-carnitine = (R)-carnitinyl-CoA + 4-(trimethylamino)butanoate. The protein operates within amine and polyamine metabolism; carnitine metabolism. In terms of biological role, catalyzes the reversible transfer of the CoA moiety from gamma-butyrobetainyl-CoA to L-carnitine to generate L-carnitinyl-CoA and gamma-butyrobetaine. Is also able to catalyze the reversible transfer of the CoA moiety from gamma-butyrobetainyl-CoA or L-carnitinyl-CoA to crotonobetaine to generate crotonobetainyl-CoA. This chain is L-carnitine CoA-transferase, found in Escherichia coli O17:K52:H18 (strain UMN026 / ExPEC).